The primary structure comprises 831 residues: Zinc phosphodiesterase ELAC protein 2 (831 aa).

The transit peptide at 1 to 16 (MWALRSLLRPLGLRTM) directs the protein to the mitochondrion. Disordered regions lie at residues 15–47 (TMSQGSARRPRPSKDPLRHLRTREKRGPGPGGP) and 179–227 (SERR…ANRK). The segment covering 186–212 (QQPSQSPRTSPNRLSPKQSSDSGSAEN) has biased composition (polar residues). Phosphoserine occurs at positions 191, 195, 200, 204, and 732. The tract at residues 791-831 (LTQQADSPEDREPQQKRAHTDEPHSPQSKKESVANTLGARV) is disordered. A Phosphothreonine modification is found at Thr-792. Ser-797 and Ser-815 each carry phosphoserine. The span at 798–822 (PEDREPQQKRAHTDEPHSPQSKKES) shows a compositional bias: basic and acidic residues.

The protein belongs to the RNase Z family. In terms of assembly, homodimer. Interacts with PTCD1. Zn(2+) is required as a cofactor.

It localises to the mitochondrion. The protein resides in the mitochondrion matrix. It is found in the mitochondrion nucleoid. Its subcellular location is the nucleus. The catalysed reaction is Endonucleolytic cleavage of RNA, removing extra 3' nucleotides from tRNA precursor, generating 3' termini of tRNAs. A 3'-hydroxy group is left at the tRNA terminus and a 5'-phosphoryl group is left at the trailer molecule.. Zinc phosphodiesterase, which displays mitochondrial tRNA 3'-processing endonuclease activity. Involved in tRNA maturation, by removing a 3'-trailer from precursor tRNA. Associates with mitochondrial DNA complexes at the nucleoids to initiate RNA processing and ribosome assembly. This chain is Zinc phosphodiesterase ELAC protein 2 (Elac2), found in Mus musculus (Mouse).